Here is a 292-residue protein sequence, read N- to C-terminus: Bifunctional protein FolD (292 aa).

NADP(+) contacts are provided by residues 166-168 (GRS), Ser-191, and Ile-232.

It belongs to the tetrahydrofolate dehydrogenase/cyclohydrolase family. As to quaternary structure, homodimer.

It carries out the reaction (6R)-5,10-methylene-5,6,7,8-tetrahydrofolate + NADP(+) = (6R)-5,10-methenyltetrahydrofolate + NADPH. The catalysed reaction is (6R)-5,10-methenyltetrahydrofolate + H2O = (6R)-10-formyltetrahydrofolate + H(+). Its pathway is one-carbon metabolism; tetrahydrofolate interconversion. Catalyzes the oxidation of 5,10-methylenetetrahydrofolate to 5,10-methenyltetrahydrofolate and then the hydrolysis of 5,10-methenyltetrahydrofolate to 10-formyltetrahydrofolate. The chain is Bifunctional protein FolD from Wolbachia sp. subsp. Drosophila simulans (strain wRi).